Here is a 445-residue protein sequence, read N- to C-terminus: Serine--tRNA ligase (445 aa).

Residue 229–231 participates in L-serine binding; the sequence is TAE. Residues 260 to 262 and Val276 each bind ATP; that span reads RKE. Residue Glu283 participates in L-serine binding. 347–350 provides a ligand contact to ATP; it reads EVSS. Residue Ser383 coordinates L-serine.

This sequence belongs to the class-II aminoacyl-tRNA synthetase family. Type-1 seryl-tRNA synthetase subfamily. Homodimer. The tRNA molecule binds across the dimer.

The protein resides in the cytoplasm. It carries out the reaction tRNA(Ser) + L-serine + ATP = L-seryl-tRNA(Ser) + AMP + diphosphate + H(+). The enzyme catalyses tRNA(Sec) + L-serine + ATP = L-seryl-tRNA(Sec) + AMP + diphosphate + H(+). It participates in aminoacyl-tRNA biosynthesis; selenocysteinyl-tRNA(Sec) biosynthesis; L-seryl-tRNA(Sec) from L-serine and tRNA(Sec): step 1/1. Its function is as follows. Catalyzes the attachment of serine to tRNA(Ser). Is also able to aminoacylate tRNA(Sec) with serine, to form the misacylated tRNA L-seryl-tRNA(Sec), which will be further converted into selenocysteinyl-tRNA(Sec). This chain is Serine--tRNA ligase, found in Thermomicrobium roseum (strain ATCC 27502 / DSM 5159 / P-2).